A 2181-amino-acid chain; its full sequence is Non-reducing polyketide synthase subA (2181 aa).

An N-terminal acylcarrier protein transacylase domain (SAT) region spans residues 74–180 (QWVKGNSTQP…LALCCGAYID (107 aa)). The region spanning 347-779 (QAQLLVLGPV…GTNAAMLVCQ (433 aa)) is the Ketosynthase family 3 (KS3) domain. Active-site for beta-ketoacyl synthase activity residues include cysteine 525, histidine 661, and histidine 702. The interval 891–1193 (VLAGQTGRRV…SFYPAALGEP (303 aa)) is malonyl-CoA:ACP transacylase (MAT) domain. Serine 977 (for acyl/malonyl transferase activity) is an active-site residue. The interval 1269-1401 (VSLIGKTQNA…GVITLQEVYS (133 aa)) is N-terminal hotdog fold. The PKS/mFAS DH domain occupies 1269 to 1579 (VSLIGKTQNA…FQKIAISSLK (311 aa)). The tract at residues 1276–1573 (QNAGVQTVEY…TILGAKFQKI (298 aa)) is product template (PT) domain. The interval 1425 to 1579 (SASVVQGDFI…FQKIAISSLK (155 aa)) is C-terminal hotdog fold. The tract at residues 1652-1673 (ISGSSRSTSSSPPSLESRSQAM) is disordered. The segment covering 1653–1670 (SGSSRSTSSSPPSLESRS) has biased composition (low complexity). The region spanning 1677–1753 (EITEGAGSAL…TLFHTIFPQQ (77 aa)) is the Carrier domain. O-(pantetheine 4'-phosphoryl)serine is present on serine 1713. Residues 1982 to 2164 (EFMNCLFSYN…QSGFGHVDWT (183 aa)) form a methyltransferase (CMeT) domain region.

The protein operates within secondary metabolite biosynthesis; terpenoid biosynthesis. Functionally, non-reducing polyketide synthase; part of the gene cluster that mediates the biosynthesis of the immunosuppressants subglutinols, meroterpenoids consisting of an alpha-pyrone (4-hydroxy-5,6-dimethyl-2-pyrone) moiety attached to a decalin core fused to a five-membered cyclic ether carrying a prenylside chain. The first step of the pathway is the synthesis of the alpha-pyrone moiety by the polyketide synthase subA via condensation of one acetyl-CoA starter unit with 3 malonyl-CoA units and 2 methylations. The alpha-pyrone is then combined with geranylgeranyl pyrophosphate (GGPP) formed by the GGPP synthase subD through the action of the prenyltransferase subC to yield a linear alpha-pyrone diterpenoid. Subsequent steps in the subglutinol biosynthetic pathway involve the decalin core formation, which is thought to be initiated by the epoxidation of the C10-C11 olefin by the FAD-dependent oxidoreductase subE. The following cyclization cascade would be catalyzed by the terpene cyclase subB. Lastly, the FAD-dependent dehydrogenase subF probably catalyzes the five-membered cyclic ether formation to complete the formation of subglutinol A. Subsequent redox reactions appear to give rise to subglutinol C and D, however, it remains unclear which enzymes are responsible for these transformations. SubD may have secondary function in the conversion of the identified subglutinols to subglutinol analog 45, which seems to be the major product of the cluster. This Metarhizium robertsii (strain ARSEF 23 / ATCC MYA-3075) (Metarhizium anisopliae (strain ARSEF 23)) protein is Non-reducing polyketide synthase subA.